Reading from the N-terminus, the 365-residue chain is Putative carbonic anhydrase-like protein 1 (365 aa).

An N-terminal signal peptide occupies residues 1 to 25; the sequence is MRFECSHFPLFLIILTCHISPLKSS. The Alpha-carbonic anhydrase domain occupies 28–356; it reads YQWSYDSDVF…TNNRLVRTNI (329 aa). Y223 is a catalytic residue. Residues T295 and 295–296 each bind substrate; that span reads TS.

Belongs to the alpha-carbonic anhydrase family.

The protein resides in the secreted. The chain is Putative carbonic anhydrase-like protein 1 (cah-1) from Caenorhabditis elegans.